The primary structure comprises 470 residues: Cysteine--tRNA ligase (470 aa).

Cys-28 contacts Zn(2+). The 'HIGH' region motif lies at 30–40 (PTVYNYIHIGN). The Zn(2+) site is built by Cys-212, His-237, and Glu-241. Positions 271–275 (KMSKS) match the 'KMSKS' region motif. Lys-274 contacts ATP.

This sequence belongs to the class-I aminoacyl-tRNA synthetase family. In terms of assembly, monomer. Requires Zn(2+) as cofactor.

It is found in the cytoplasm. It carries out the reaction tRNA(Cys) + L-cysteine + ATP = L-cysteinyl-tRNA(Cys) + AMP + diphosphate. The protein is Cysteine--tRNA ligase of Lactiplantibacillus plantarum (strain ATCC BAA-793 / NCIMB 8826 / WCFS1) (Lactobacillus plantarum).